A 523-amino-acid polypeptide reads, in one-letter code: UDP-glucuronosyltransferase 3A1 (523 aa).

The signal sequence occupies residues 1 to 22; sequence MAGQQALLLFGFILPGLLFSEA. Topologically, residues 23–483 are extracellular; the sequence is AKILTVSLVG…HAFQQPWYEQ (461 aa). N-linked (GlcNAc...) asparagine glycosylation is present at Asn52. The chain crosses the membrane as a helical span at residues 484 to 504; the sequence is YLLDVFLFLLVVTLGTMWLCG. At 505–523 the chain is on the cytoplasmic side; it reads KLLGLVARWLCGARKLKKA.

This sequence belongs to the UDP-glycosyltransferase family.

Its subcellular location is the membrane. It carries out the reaction glucuronate acceptor + UDP-alpha-D-glucuronate = acceptor beta-D-glucuronoside + UDP + H(+). Functionally, UDP-glucuronosyltransferases catalyze phase II biotransformation reactions in which lipophilic substrates are conjugated with glucuronic acid to increase water solubility and enhance excretion. They are of major importance in the conjugation and subsequent elimination of potentially toxic xenobiotics and endogenous compounds. The protein is UDP-glucuronosyltransferase 3A1 (UGT3A1) of Bos taurus (Bovine).